A 545-amino-acid polypeptide reads, in one-letter code: GMP synthase [glutamine-hydrolyzing] (545 aa).

A Glutamine amidotransferase type-1 domain is found at 17–211; the sequence is TVLVLDMGSQ…ATKICGARPD (195 aa). The active-site Nucleophile is the Cys93. Active-site residues include His185 and Glu187. The GMPS ATP-PPase domain maps to 212-420; the sequence is WKMDDFSARE…LGIHEELIGR (209 aa). An ATP-binding site is contributed by 240 to 246; it reads SGGVDST. Residues Arg313, Asp482, Lys537, and Glu543 each contribute to the XMP site.

As to quaternary structure, homodimer. Mg(2+) is required as a cofactor.

Its subcellular location is the cytoplasm. The protein resides in the cytosol. The enzyme catalyses XMP + L-glutamine + ATP + H2O = GMP + L-glutamate + AMP + diphosphate + 2 H(+). It functions in the pathway purine metabolism; GMP biosynthesis; GMP from XMP (L-Gln route): step 1/1. Catalyzes the conversion of xanthine monophosphate (XMP) to GMP in the presence of glutamine and ATP through an adenyl-XMP intermediate. The chain is GMP synthase [glutamine-hydrolyzing] (GUA1) from Gibberella zeae (strain ATCC MYA-4620 / CBS 123657 / FGSC 9075 / NRRL 31084 / PH-1) (Wheat head blight fungus).